Reading from the N-terminus, the 169-residue chain is Thermonuclease (169 aa).

The first 26 residues, 1–26, serve as a signal peptide directing secretion; sequence MKKITTGLIIVVAAIIVLSIQFMTES. Active-site residues include R65, E73, and R115.

The protein belongs to the thermonuclease family. Ca(2+) serves as cofactor.

The protein localises to the secreted. It carries out the reaction Endonucleolytic cleavage to nucleoside 3'-phosphates and 3'-phosphooligonucleotide end-products.. Enzyme that catalyzes the hydrolysis of both DNA and RNA at the 5'-position of the phosphodiester bond. The sequence is that of Thermonuclease (nucH) from Staphylococcus hyicus.